The sequence spans 358 residues: Peptide chain release factor 1 (358 aa).

Q235 bears the N5-methylglutamine mark.

It belongs to the prokaryotic/mitochondrial release factor family. Methylated by PrmC. Methylation increases the termination efficiency of RF1.

It is found in the cytoplasm. Its function is as follows. Peptide chain release factor 1 directs the termination of translation in response to the peptide chain termination codons UAG and UAA. This is Peptide chain release factor 1 from Neisseria gonorrhoeae (strain NCCP11945).